The following is a 343-amino-acid chain: UDP-3-O-acylglucosamine N-acyltransferase 2 (343 aa).

His251 serves as the catalytic Proton acceptor.

It belongs to the transferase hexapeptide repeat family. LpxD subfamily. As to quaternary structure, homotrimer.

It carries out the reaction a UDP-3-O-[(3R)-3-hydroxyacyl]-alpha-D-glucosamine + a (3R)-hydroxyacyl-[ACP] = a UDP-2-N,3-O-bis[(3R)-3-hydroxyacyl]-alpha-D-glucosamine + holo-[ACP] + H(+). It functions in the pathway bacterial outer membrane biogenesis; LPS lipid A biosynthesis. Catalyzes the N-acylation of UDP-3-O-acylglucosamine using 3-hydroxyacyl-ACP as the acyl donor. Is involved in the biosynthesis of lipid A, a phosphorylated glycolipid that anchors the lipopolysaccharide to the outer membrane of the cell. This chain is UDP-3-O-acylglucosamine N-acyltransferase 2, found in Legionella pneumophila (strain Lens).